The chain runs to 553 residues: Putative transport protein KPN78578_40470 (553 aa).

The next 5 helical transmembrane spans lie at 4–24 (IALT…IGNV), 28–48 (GVGF…HFVD), 65–85 (FGLI…FFAS), 95–115 (LFAI…HKLF), and 158–178 (MSYA…MWLV). 2 RCK C-terminal domains span residues 192–276 (RFEE…VIGQ) and 279–361 (ATSL…ELGN). The next 6 membrane-spanning stretches (helical) occupy residues 371–391 (MLPV…PLFI), 403–425 (AGGP…LYWF), 437–457 (LGIV…FVAT), 464–484 (LSWI…VGVL), 493–513 (YLTL…LAFA), and 532–552 (PLVM…FWGL).

This sequence belongs to the AAE transporter (TC 2.A.81) family. YidE subfamily.

The protein localises to the cell membrane. This Klebsiella pneumoniae subsp. pneumoniae (strain ATCC 700721 / MGH 78578) protein is Putative transport protein KPN78578_40470.